The chain runs to 670 residues: Beta-fructofuranosidase 1 (670 aa).

Residues 1–40 (MIPAVADPTTLDGGGARRPLLPETDPRGRAAAGAEQKRPP) are disordered. Residues 1–44 (MIPAVADPTTLDGGGARRPLLPETDPRGRAAAGAEQKRPPATPT) lie on the Cytoplasmic side of the membrane. The propeptide at 1 to 112 (MIPAVADPTT…APLLGSGALQ (112 aa)) is removed in mature form. Residues 45 to 65 (VLTAVVSAVLLLVLVAVTVLA) form a helical; Signal-anchor for type II membrane protein membrane-spanning segment. The Lumenal segment spans residues 66-670 (SQHVDGQAGG…RPYPATTTSL (605 aa)). Residues 136–139 (WMND), glutamine 155, and tryptophan 163 each bind substrate. The active site involves aspartate 139. N-linked (GlcNAc...) asparagine glycosylation is present at asparagine 165. Substrate is bound by residues 198–199 (WS) and 263–264 (RD). Asparagine 275 carries N-linked (GlcNAc...) asparagine glycosylation. Residues glutamate 322 and aspartate 362 each contribute to the substrate site. An N-linked (GlcNAc...) asparagine glycan is attached at asparagine 518. A disulfide bridge connects residues cysteine 519 and cysteine 567. N-linked (GlcNAc...) asparagine glycosylation is found at asparagine 595 and asparagine 639.

This sequence belongs to the glycosyl hydrolase 32 family. May be present in two forms, a 70 kDa monomer and a heterodimer of the 30 kDa and 38 kDa subunits. The ratio of the levels of the two forms within cells appears to be regulated developmentally.

The protein localises to the membrane. The protein resides in the vacuole lumen. The catalysed reaction is Hydrolysis of terminal non-reducing beta-D-fructofuranoside residues in beta-D-fructofuranosides.. It participates in glycan biosynthesis; sucrose metabolism. The polypeptide is Beta-fructofuranosidase 1 (IVR1) (Zea mays (Maize)).